A 263-amino-acid polypeptide reads, in one-letter code: MSLVAEAFVSQIAATEPWPENATLYQQLRGEQILLSDNAASLAVQAFLQMCNLPVKVVCRANAEYMSPSGKVPFIHVGNQVVSELGPIVQFVKAKGHSLSDGLDEVQKAEMKAYMELVNNMLLTAELYLQWCDEATVGEITIARYGSPYPWPLNHILAYQKQWEVKRKMKAIGWGNKTLDQVLEDVDQCCQALSQRLGTQPYFFNKQPTELDALVFGHLYTILTTQLTSDELSEKVKNYSNLLAFCRRIEQHYFEDWGKGRLS.

S2 carries the post-translational modification N-acetylserine.

It belongs to the metaxin family. Interacts with MTX1/metaxin-1. Associates with the mitochondrial contact site and cristae organizing system (MICOS) complex, composed of at least MICOS10/MIC10, CHCHD3/MIC19, CHCHD6/MIC25, APOOL/MIC27, IMMT/MIC60, APOO/MIC23/MIC26 and QIL1/MIC13. This complex was also known under the names MINOS or MitOS complex. The MICOS complex associates with mitochondrial outer membrane proteins SAMM50, MTX1 and MTX2 (together described as components of the mitochondrial outer membrane sorting assembly machinery (SAM) complex) and DNAJC11, mitochondrial inner membrane protein TMEM11 and with HSPA9. The MICOS and SAM complexes together with DNAJC11 are part of a large protein complex spanning both membranes termed the mitochondrial intermembrane space bridging (MIB) complex.

It is found in the mitochondrion outer membrane. The protein localises to the mitochondrion. Functionally, involved in transport of proteins into the mitochondrion. The polypeptide is Metaxin-2 (Mtx2) (Mus musculus (Mouse)).